We begin with the raw amino-acid sequence, 257 residues long: Putative hydro-lyase Bcen2424_3550 (257 aa).

Belongs to the D-glutamate cyclase family.

The sequence is that of Putative hydro-lyase Bcen2424_3550 from Burkholderia cenocepacia (strain HI2424).